The chain runs to 833 residues: Leucine--tRNA ligase (833 aa).

The 'HIGH' region signature appears at 41–52; sequence PYPSGAGLHVGH. The 'KMSKS' region motif lies at 610 to 614; that stretch reads KMSKS. Lys-613 contacts ATP.

It belongs to the class-I aminoacyl-tRNA synthetase family.

Its subcellular location is the cytoplasm. It catalyses the reaction tRNA(Leu) + L-leucine + ATP = L-leucyl-tRNA(Leu) + AMP + diphosphate. The sequence is that of Leucine--tRNA ligase from Streptococcus suis (strain 05ZYH33).